Reading from the N-terminus, the 149-residue chain is SsrA-binding protein (149 aa).

It belongs to the SmpB family.

It is found in the cytoplasm. Required for rescue of stalled ribosomes mediated by trans-translation. Binds to transfer-messenger RNA (tmRNA), required for stable association of tmRNA with ribosomes. tmRNA and SmpB together mimic tRNA shape, replacing the anticodon stem-loop with SmpB. tmRNA is encoded by the ssrA gene; the 2 termini fold to resemble tRNA(Ala) and it encodes a 'tag peptide', a short internal open reading frame. During trans-translation Ala-aminoacylated tmRNA acts like a tRNA, entering the A-site of stalled ribosomes, displacing the stalled mRNA. The ribosome then switches to translate the ORF on the tmRNA; the nascent peptide is terminated with the 'tag peptide' encoded by the tmRNA and targeted for degradation. The ribosome is freed to recommence translation, which seems to be the essential function of trans-translation. The chain is SsrA-binding protein from Mesoplasma florum (strain ATCC 33453 / NBRC 100688 / NCTC 11704 / L1) (Acholeplasma florum).